The sequence spans 312 residues: Ribosomal RNA small subunit methyltransferase H (312 aa).

S-adenosyl-L-methionine contacts are provided by residues 34 to 36, Asp54, Phe81, Asp102, and Gln109; that span reads AGH.

This sequence belongs to the methyltransferase superfamily. RsmH family.

The protein localises to the cytoplasm. The catalysed reaction is cytidine(1402) in 16S rRNA + S-adenosyl-L-methionine = N(4)-methylcytidine(1402) in 16S rRNA + S-adenosyl-L-homocysteine + H(+). In terms of biological role, specifically methylates the N4 position of cytidine in position 1402 (C1402) of 16S rRNA. The chain is Ribosomal RNA small subunit methyltransferase H from Geobacter sp. (strain M21).